Consider the following 237-residue polypeptide: MPERYNRVLLKLSGEVFGGGGIGVDADVVSAKAREIAEIANSGVQVAVVVGGGNFFRGAELQQHGMQRDRADYMGMLGTVMNCLALQDFCEKAGVDTRVQTAITMGQVAEPYIPRKAERHMEKGRVVIFGAGSGMPYFSTDTVAAQRALEIGADALLMGKQGVDGVYDSDPKTNPNAHKFDELTYDEFLSRDLKVADATAVAMARDNDLTMVFFNLEMPGNISRVINGEDIGTTVHR.

K11–G14 provides a ligand contact to ATP. The tract at residues G18–G23 is involved in allosteric activation by GTP. Residue G52 coordinates UMP. G53 and R57 together coordinate ATP. Residues D72 and S133–T140 contribute to the UMP site. ATP contacts are provided by Q161, Y167, and D170.

The protein belongs to the UMP kinase family. As to quaternary structure, homohexamer.

It is found in the cytoplasm. It catalyses the reaction UMP + ATP = UDP + ADP. Its pathway is pyrimidine metabolism; CTP biosynthesis via de novo pathway; UDP from UMP (UMPK route): step 1/1. With respect to regulation, allosterically activated by GTP. Inhibited by UTP. Catalyzes the reversible phosphorylation of UMP to UDP. The polypeptide is Uridylate kinase (Cutibacterium acnes (strain DSM 16379 / KPA171202) (Propionibacterium acnes)).